The sequence spans 545 residues: Methionine--tRNA ligase (545 aa).

Positions 12–22 (PYANGSLHIGH) match the 'HIGH' region motif. Positions 143, 146, 156, and 159 each coordinate Zn(2+). A 'KMSKS' region motif is present at residues 329 to 333 (KLSKS). Lys332 serves as a coordination point for ATP.

The protein belongs to the class-I aminoacyl-tRNA synthetase family. MetG type 1 subfamily. As to quaternary structure, monomer. It depends on Zn(2+) as a cofactor.

It is found in the cytoplasm. The enzyme catalyses tRNA(Met) + L-methionine + ATP = L-methionyl-tRNA(Met) + AMP + diphosphate. Is required not only for elongation of protein synthesis but also for the initiation of all mRNA translation through initiator tRNA(fMet) aminoacylation. This is Methionine--tRNA ligase (metG) from Buchnera aphidicola subsp. Baizongia pistaciae (strain Bp).